We begin with the raw amino-acid sequence, 489 residues long: Betaine aldehyde dehydrogenase (489 aa).

Residues threonine 26 and aspartate 93 each coordinate K(+). 150–152 is a binding site for NAD(+); the sequence is GAW. Lysine 162 acts as the Charge relay system in catalysis. 176 to 179 contacts NAD(+); that stretch reads KPSE. Isoleucine 180 is a binding site for K(+). 229–232 contacts NAD(+); it reads GVET. Leucine 245 is a K(+) binding site. Catalysis depends on glutamate 251, which acts as the Proton acceptor. NAD(+) is bound by residues glycine 253, cysteine 285, and glutamate 386. Cysteine 285 acts as the Nucleophile in catalysis. At cysteine 285 the chain carries Cysteine sulfenic acid (-SOH). The K(+) site is built by lysine 456 and glycine 459. Glutamate 463 serves as the catalytic Charge relay system.

Belongs to the aldehyde dehydrogenase family. Dimer of dimers. K(+) serves as cofactor.

It catalyses the reaction betaine aldehyde + NAD(+) + H2O = glycine betaine + NADH + 2 H(+). Its pathway is amine and polyamine biosynthesis; betaine biosynthesis via choline pathway; betaine from betaine aldehyde: step 1/1. Involved in the biosynthesis of the osmoprotectant glycine betaine. Catalyzes the irreversible oxidation of betaine aldehyde to the corresponding acid. The polypeptide is Betaine aldehyde dehydrogenase (Paraburkholderia xenovorans (strain LB400)).